The following is a 581-amino-acid chain: FAD-dependent monooxygenase DEP4 (581 aa).

Residue 43-46 (VWSK) participates in FAD binding. 54-56 (FAQ) contributes to the NADP(+) binding site. Position 108 (Val-108) interacts with FAD. NADP(+) is bound by residues 183–202 (VGRS…EGKR), 219–220 (AP), and 351–352 (DI). Met-470 is an FAD binding site.

It belongs to the FAD-binding monooxygenase family. FAD serves as cofactor.

It functions in the pathway polyketide biosynthesis. Functionally, FAD-dependent monooxygenase; part of the gene cluster that mediates the biosynthesis of depudecin, a highly oxidized eleven-carbon linear polyketide that acts as a histone deacetylase (HDAC) inhibitor and makes a small contribution to pathogenesis. The reducing polyketide synthase DEP5 is the central enzyme in depudecin biosynthesis by yielding the backbone polyketide chain. The monooxygenases DEP2 and DEP4, as well as the uncharacterized protein DEP1, then act as tailoring enzymes to modify the intermediate polyketide chain into depudecin. In Alternaria brassicicola (Dark leaf spot agent), this protein is FAD-dependent monooxygenase DEP4.